The following is a 210-amino-acid chain: MELHNIRDEYTKRVLSQHDCHENPISQFEQWQKEAIHAQVNEPTAMNIATVDEQGRPNSRMVLLKEVNEQGFVFFTNYLSRKGGCIEHNPYVALTFFWPELERQVRIEGKAVKIPAEQSDKYFATRPYTSRIGAWASEQSAVISNYKSLLAKAALVAAKHPLNVPRPDYWGGYLVVPETVEFWQGRPSRLHDRIRYRKESDNWIRERLSP.

Residues 7–10 (RDEY) and lysine 65 each bind substrate. FMN contacts are provided by residues 60–65 (RMVLLK), 75–76 (FT), arginine 81, lysine 82, and glutamine 104. Substrate contacts are provided by tyrosine 122, arginine 126, and serine 130. FMN-binding positions include 139 to 140 (QS) and tryptophan 183. A substrate-binding site is contributed by 189 to 191 (RLH). An FMN-binding site is contributed by arginine 193.

It belongs to the pyridoxamine 5'-phosphate oxidase family. As to quaternary structure, homodimer. The cofactor is FMN.

The catalysed reaction is pyridoxamine 5'-phosphate + O2 + H2O = pyridoxal 5'-phosphate + H2O2 + NH4(+). It catalyses the reaction pyridoxine 5'-phosphate + O2 = pyridoxal 5'-phosphate + H2O2. Its pathway is cofactor metabolism; pyridoxal 5'-phosphate salvage; pyridoxal 5'-phosphate from pyridoxamine 5'-phosphate: step 1/1. It functions in the pathway cofactor metabolism; pyridoxal 5'-phosphate salvage; pyridoxal 5'-phosphate from pyridoxine 5'-phosphate: step 1/1. Catalyzes the oxidation of either pyridoxine 5'-phosphate (PNP) or pyridoxamine 5'-phosphate (PMP) into pyridoxal 5'-phosphate (PLP). The polypeptide is Pyridoxine/pyridoxamine 5'-phosphate oxidase (Haemophilus influenzae (strain ATCC 51907 / DSM 11121 / KW20 / Rd)).